A 353-amino-acid chain; its full sequence is Type 2 DNA topoisomerase 6 subunit A (353 aa).

Residues 2–138 (NRREIAINKL…LGLMPEEDGA (137 aa)) form the Topo IIA-type catalytic domain. Tyrosine 96 serves as the catalytic O-(5'-phospho-DNA)-tyrosine intermediate. Positions 186 and 238 each coordinate Mg(2+).

It belongs to the TOP6A family. Homodimer. Heterotetramer of two Top6A and two Top6B chains. Mg(2+) serves as cofactor.

The catalysed reaction is ATP-dependent breakage, passage and rejoining of double-stranded DNA.. Its function is as follows. Relaxes both positive and negative superturns and exhibits a strong decatenase activity. The chain is Type 2 DNA topoisomerase 6 subunit A from Methanothermobacter thermautotrophicus (strain ATCC 29096 / DSM 1053 / JCM 10044 / NBRC 100330 / Delta H) (Methanobacterium thermoautotrophicum).